Consider the following 807-residue polypeptide: Spondin-1 (807 aa).

A signal peptide spans 1 to 28; the sequence is MRLSPVLLRLSRGPALLALALPLAVALA. Residues 29-194 form the Reelin domain; sequence FSDETLDKVP…DSTFDGVTDK (166 aa). 17 disulfide bridges follow: Cys44–Cys128, Cys156–Cys182, Cys199–Cys336, Cys200–Cys340, Cys202–Cys415, Cys443–Cys480, Cys454–Cys489, Cys459–Cys494, Cys502–Cys538, Cys513–Cys517, Cys548–Cys554, Cys559–Cys595, Cys570–Cys574, Cys605–Cys610, Cys615–Cys650, Cys626–Cys630, and Cys660–Cys665. The region spanning 195 to 388 is the Spondin domain; that stretch reads PILDCCACGT…LTSLDHPQSP (194 aa). Residue Asn214 is glycosylated (N-linked (GlcNAc...) asparagine). Ca(2+) is bound by residues Asp325, Asp354, and Asp358. TSP type-1 domains follow at residues 442–495, 501–555, 558–611, 614–666, 668–721, and 754–806; these read TCIY…PGCS, TCTM…EECS, SCLT…PECH, PCLL…PECP, DCEL…RKCL, and GCRM…NVHP. Residue Asn681 is glycosylated (N-linked (GlcNAc...) asparagine).

Binds to the central extracellular domain of APP and inhibits beta-secretase cleavage of APP.

The protein resides in the secreted. Its subcellular location is the extracellular space. It is found in the extracellular matrix. In terms of biological role, cell adhesion protein that promotes the attachment of spinal cord and sensory neuron cells and the outgrowth of neurites in vitro. May contribute to the growth and guidance of axons in both the spinal cord and the PNS. Major factor for vascular smooth muscle cell. This is Spondin-1 (SPON1) from Bos taurus (Bovine).